A 258-amino-acid polypeptide reads, in one-letter code: Axonemal dynein light intermediate polypeptide 1 (258 aa).

2 disordered regions span residues 1–60 (MIPP…CVPD) and 202–231 (DLER…EEKK). A coiled-coil region spans residues 176–255 (MRKALQAEQG…LKAQLEGIIA (80 aa)).

The protein belongs to the inner dynein arm light chain family. As to quaternary structure, interacts with CFAP45. Interacts with DYNC1H1.

It localises to the cell projection. It is found in the cilium. The protein localises to the flagellum. Its subcellular location is the dynein axonemal particle. The protein resides in the cytoplasm. Functionally, involved in sperm flagellum assembly. The sequence is that of Axonemal dynein light intermediate polypeptide 1 from Rattus norvegicus (Rat).